Consider the following 723-residue polypeptide: Lim and transglutaminase domain protein ltd-1 (723 aa).

In terms of domain architecture, LIM zinc-binding spans 5-72; that stretch reads QHCNRCGKQV…SNHVPIAGPH (68 aa).

The protein belongs to the transglutaminase-like superfamily. As to expression, expressed in the Y and U rectal epithelial cells, in marginal cells of the terminal bulb and isthmus of the pharynx (at protein level).

Its subcellular location is the cytoplasm. It localises to the cytoskeleton. Its function is as follows. Cytoskeleton-associated protein. May play a role in hypodermal cell development. The chain is Lim and transglutaminase domain protein ltd-1 from Caenorhabditis elegans.